The following is a 648-amino-acid chain: Protein teflon (648 aa).

A C2H2-type 1 zinc finger spans residues 33-56 (LYCHFCRDLFTQLPEFLRHLQGAH). Disordered stretches follow at residues 76–127 (SGEQ…GSQN) and 146–170 (EHIN…NSES). The segment covering 85–94 (VGHNSSSSDS) has biased composition (polar residues). The segment covering 96 to 107 (GLAKSEDSRATE) has biased composition (basic and acidic residues). A C2H2-type 2; degenerate zinc finger spans residues 598-620 (YFCKCCDDIFTLNEDYIRHLVSQ). The segment at 624–647 (YQCTKCIKTFKYQGHYDKHMRTVH) adopts a C2H2-type 3 zinc-finger fold.

This sequence belongs to the Teflon family.

The protein resides in the nucleus. Its subcellular location is the chromosome. Its function is as follows. Specifically required in males for proper segregation of autosomal bivalents at meiosis I. Expression is required in the male germ line prior to spermatocyte stage S4. May have a role as a bridging molecule maintaining adhesion to hold autosome bivalents together via heterochromatic connections. This is Protein teflon from Drosophila yakuba (Fruit fly).